A 79-amino-acid chain; its full sequence is Acyl carrier protein (79 aa).

The Carrier domain maps to 2–77 (SDIEARVRKI…HAIDYIKSNA (76 aa)). Ser37 is subject to O-(pantetheine 4'-phosphoryl)serine.

It belongs to the acyl carrier protein (ACP) family. In terms of processing, 4'-phosphopantetheine is transferred from CoA to a specific serine of apo-ACP by AcpS. This modification is essential for activity because fatty acids are bound in thioester linkage to the sulfhydryl of the prosthetic group.

It localises to the cytoplasm. It functions in the pathway lipid metabolism; fatty acid biosynthesis. In terms of biological role, carrier of the growing fatty acid chain in fatty acid biosynthesis. The sequence is that of Acyl carrier protein from Xylella fastidiosa (strain M23).